Consider the following 207-residue polypeptide: MRVFTLIAILFSSSLLTHAFSSNYAPVGISLPAFTKECLYYDLSSDKDVLVVSYQVLTGGNFEIDFDITAPDGSVIVTERQKKHSDFLLKSFGIGKYTFCLSNNYGTSPKKVEITLEKEKEIVSSHESKEDIIANNAIEEIDRNLNKITKTMDYLRAREWRNMYTVSSTESRLTWLSLLIMGVMVGISIVQALIIQFFFTSRQKNYV.

The signal sequence occupies residues 1–21; it reads MRVFTLIAILFSSSLLTHAFS. The Lumenal segment spans residues 22–174; that stretch reads SNYAPVGISL…TVSSTESRLT (153 aa). The GOLD domain maps to 36–118; the sequence is KECLYYDLSS…PKKVEITLEK (83 aa). Residues 175–195 traverse the membrane as a helical segment; that stretch reads WLSLLIMGVMVGISIVQALII. The Cytoplasmic segment spans residues 196–207; that stretch reads QFFFTSRQKNYV.

Belongs to the EMP24/GP25L family.

The protein resides in the endoplasmic reticulum membrane. In terms of biological role, involved in vesicular protein trafficking. The sequence is that of Protein ERP4 (ERP4) from Saccharomyces cerevisiae (strain ATCC 204508 / S288c) (Baker's yeast).